A 147-amino-acid chain; its full sequence is Epididymal secretory protein E3-beta (147 aa).

An N-terminal signal peptide occupies residues 1 to 25; it reads MASSLKIWGTLLALLCILCTLLVQS.

In terms of tissue distribution, epididymis.

The protein localises to the secreted. Functionally, possible function in sperm maturation. The polypeptide is Epididymal secretory protein E3-beta (EDDM3B) (Homo sapiens (Human)).